The sequence spans 201 residues: Holliday junction branch migration complex subunit RuvA (201 aa).

A domain I region spans residues 1 to 64 (MFAFLRGELV…EDAQQLFGFL (64 aa)). The interval 65-143 (DEEELQLFRL…KIQPAASGKT (79 aa)) is domain II. Positions 144 to 154 (AGAPQALQLNE) are flexible linker. The domain III stretch occupies residues 154 to 201 (EDALAALMTLGFPKPAAQKAISGILETSPGLSVEEVVRAALIAIHNNF).

The protein belongs to the RuvA family. In terms of assembly, homotetramer. Forms an RuvA(8)-RuvB(12)-Holliday junction (HJ) complex. HJ DNA is sandwiched between 2 RuvA tetramers; dsDNA enters through RuvA and exits via RuvB. An RuvB hexamer assembles on each DNA strand where it exits the tetramer. Each RuvB hexamer is contacted by two RuvA subunits (via domain III) on 2 adjacent RuvB subunits; this complex drives branch migration. In the full resolvosome a probable DNA-RuvA(4)-RuvB(12)-RuvC(2) complex forms which resolves the HJ.

The protein resides in the cytoplasm. Functionally, the RuvA-RuvB-RuvC complex processes Holliday junction (HJ) DNA during genetic recombination and DNA repair, while the RuvA-RuvB complex plays an important role in the rescue of blocked DNA replication forks via replication fork reversal (RFR). RuvA specifically binds to HJ cruciform DNA, conferring on it an open structure. The RuvB hexamer acts as an ATP-dependent pump, pulling dsDNA into and through the RuvAB complex. HJ branch migration allows RuvC to scan DNA until it finds its consensus sequence, where it cleaves and resolves the cruciform DNA. The protein is Holliday junction branch migration complex subunit RuvA of Chlorobaculum tepidum (strain ATCC 49652 / DSM 12025 / NBRC 103806 / TLS) (Chlorobium tepidum).